A 520-amino-acid chain; its full sequence is Cytochrome b5 reductase 4 (520 aa).

M1 is modified (N-acetylmethionine). Residues 1–27 (MLNVPSQAFPAPGSQQRVASQGRSKVP) are disordered. Residues 13–23 (GSQQRVASQGR) are compositionally biased toward polar residues. A Cytochrome b5 heme-binding domain is found at 54-130 (LIEVTEEELK…LKECLVGRMA (77 aa)). Heme-binding residues include H89 and H112. Residues 164 to 255 (PSSPSYDWFQ…KETVSWKCLG (92 aa)) form the CS domain. One can recognise an FAD-binding FR-type domain in the interval 272–384 (LYYRQCQLIS…SGPEGNFKVS (113 aa)). FAD is bound by residues 364 to 379 (DRLQ…GPEG) and 391 to 423 (DLFL…KVKL).

Belongs to the flavoprotein pyridine nucleotide cytochrome reductase family. It depends on FAD as a cofactor. In terms of tissue distribution, isoform 2 is expressed in testis, brain, skeletal muscle and in the male germline.

The protein localises to the endoplasmic reticulum. It catalyses the reaction 2 Fe(III)-[cytochrome b5] + NADH = 2 Fe(II)-[cytochrome b5] + NAD(+) + H(+). In terms of biological role, NADH-cytochrome b5 reductase involved in endoplasmic reticulum stress response pathway. Plays a critical role in protecting pancreatic beta-cells against oxidant stress, possibly by protecting the cell from excess buildup of reactive oxygen species (ROS). The protein is Cytochrome b5 reductase 4 (Cyb5r4) of Rattus norvegicus (Rat).